The following is an 81-amino-acid chain: uncharacterized protein (81 aa).

The transit peptide at 1–20 (MYSRVLSVAAIVTMALAVQA) directs the protein to the mitochondrion. The disordered stretch occupies residues 27–53 (YGNTTNSTGTTNGTNGTNTTTSSTATQ). A compositionally biased stretch (low complexity) spans 28-53 (GNTTNSTGTTNGTNGTNTTTSSTATQ). A helical transmembrane segment spans residues 59–79 (ITNFSSGAFVIAMIAVACSVM).

The protein localises to the mitochondrion membrane. This is an uncharacterized protein from Schizosaccharomyces pombe (strain 972 / ATCC 24843) (Fission yeast).